Reading from the N-terminus, the 750-residue chain is Neprilysin (750 aa).

Polar residues predominate over residues 1–14 (MGKSESQMDITDIN). A disordered region spans residues 1–20 (MGKSESQMDITDINTPKPKK). Residue Gly-2 is the site of N-myristoyl glycine attachment. At 2–28 (GKSESQMDITDINTPKPKKKQRWTPLE) the chain is on the cytoplasmic side. A phosphoserine mark is found at Ser-4 and Ser-6. The Stop-transfer sequence signature appears at 16–23 (PKPKKKQR). The chain crosses the membrane as a helical; Signal-anchor for type II membrane protein span at residues 29–51 (ISLSVLVLLLTIIAVTMIALYAT). Over 52 to 750 (YDDGICKSSD…MNPEKKCRVW (699 aa)) the chain is Extracellular. The Peptidase M13 domain maps to 56-750 (ICKSSDCIKS…MNPEKKCRVW (695 aa)). 6 cysteine pairs are disulfide-bonded: Cys-57–Cys-62, Cys-80–Cys-735, Cys-88–Cys-695, Cys-143–Cys-411, Cys-234–Cys-242, and Cys-621–Cys-747. Arg-103 serves as a coordination point for a peptide. N-linked (GlcNAc...) asparagine glycosylation occurs at Asn-145. N-linked (GlcNAc...) asparagine glycosylation is found at Asn-285, Asn-311, Asn-325, and Asn-335. Residue His-584 participates in Zn(2+) binding. Glu-585 is a catalytic residue. Residue His-588 participates in Zn(2+) binding. Asn-628 carries an N-linked (GlcNAc...) asparagine glycan. Glu-647 contributes to the Zn(2+) binding site. Asp-651 serves as the catalytic Proton donor.

The protein belongs to the peptidase M13 family. It depends on Zn(2+) as a cofactor. In terms of processing, myristoylation is a determinant of membrane targeting. Post-translationally, glycosylation at Asn-628 is necessary both for surface expression and neutral endopeptidase activity.

Its subcellular location is the cell membrane. It carries out the reaction Preferential cleavage of polypeptides between hydrophobic residues, particularly with Phe or Tyr at P1'.. It catalyses the reaction substance P + H2O = substance P(1-9) + L-Leu-L-Met-NH2. The enzyme catalyses substance P + H2O = substance P(1-7) + L-Phe-Gly-L-Leu-L-Met-NH2. The catalysed reaction is neurotensin + H2O = neurotensin(1-11) + L-isoleucyl-L-leucine. It carries out the reaction neurotensin + H2O = neurotensin(1-10) + L-tyrosyl-L-isoleucyl-L-leucine. In terms of biological role, thermolysin-like specificity, but is almost confined on acting on polypeptides of up to 30 amino acids. Biologically important in the destruction of opioid peptides such as Met- and Leu-enkephalins by cleavage of a Gly-Phe bond. Catalyzes cleavage of bradykinin, substance P and neurotensin peptides. Able to cleave angiotensin-1, angiotensin-2 and angiotensin 1-9. Involved in the degradation of atrial natriuretic factor (ANF) and brain natriuretic factor (BNP(1-32)). Displays UV-inducible elastase activity toward skin preelastic and elastic fibers. The protein is Neprilysin (MME) of Pongo abelii (Sumatran orangutan).